The sequence spans 152 residues: Putative polyketide cyclase (152 aa).

It to polyketide cyclases.

It participates in antibiotic biosynthesis; curamycin biosynthesis. The protein is Putative polyketide cyclase (curF) of Streptomyces cyaneus (Streptomyces curacoi).